A 490-amino-acid polypeptide reads, in one-letter code: MEESKEEVHVAFFPFMTPGHSIPMLDLVRLFIARGVKTTVFTTPLNAPNISKYLNIIQDSSSNKNTIYVTPFPSKEAGLPEGVESQDSTTSPEMTLKFFVAMELLQDPLDVFLKETKPHCLVADNFFPYATDIASKYGIPRFVFQFTGFFPMSVMMALNRFHPQNSVSSDDDPFLVPSLPHDIKLTKSQLQREYEGSDGIDTALSRLCNGAGRALFTSYGVIFNSFYQLEPDYVDYYTNTMGKRSRVWHVGPVSLCNRRHVEGKSGRGRSASISEHLCLEWLNAKEPNSVIYVCFGSLTCFSNEQLKEIATALERCEEYFIWVLKGGKDNEQEWLPQGFEERVEGKGLIIRGWAPQVLILDHEAIGGFVTHCGWNSTLESISAGVPMVTWPIYAEQFYNEKLVTDVLKVGVKVGSMKWSETTGATHLKHEEIEKALKQIMVGEEVLEMRKRASKLKEMAYNAVEEGGSSYSHLTSLIDDLMASKAVLQKF.

The Proton acceptor role is filled by His-20. Asp-124 (charge relay) is an active-site residue. UDP is bound by residues Ser-297, Trp-353, Ala-354, His-371, Asn-375, Ser-376, Glu-379, and Tyr-393.

It belongs to the UDP-glycosyltransferase family. As to expression, mainly expressed in flowers, flower buds and young leaves, and, to a lesser extent, in old leaves, stems and roots.

The protein operates within secondary metabolite biosynthesis; terpenoid biosynthesis. Functionally, component of the oleanane-type triterpene saponins (e.g. saponarioside A and saponarioside B) biosynthetic pathway, leading to the production of natural products with detergent properties used as traditional sources of soap. A glycosyltransferase that mediates the conversion of QA-triFRX to QA-triFRXX via the elongation of the C-28 sugar chain with a D-xylose. The sequence is that of UDP-glucosyl transferase 73M2 from Saponaria officinalis (Common soapwort).